A 418-amino-acid polypeptide reads, in one-letter code: Glutamyl-tRNA(Gln) amidotransferase subunit D (418 aa).

Residues 74–405 enclose the Asparaginase/glutaminase domain; the sequence is KNISILSTGG…EDAKELMSKD (332 aa). Catalysis depends on residues Thr-84, Thr-160, Asp-161, and Lys-237.

This sequence belongs to the asparaginase 1 family. GatD subfamily. Heterodimer of GatD and GatE.

The catalysed reaction is L-glutamyl-tRNA(Gln) + L-glutamine + ATP + H2O = L-glutaminyl-tRNA(Gln) + L-glutamate + ADP + phosphate + H(+). Its function is as follows. Allows the formation of correctly charged Gln-tRNA(Gln) through the transamidation of misacylated Glu-tRNA(Gln) in organisms which lack glutaminyl-tRNA synthetase. The reaction takes place in the presence of glutamine and ATP through an activated gamma-phospho-Glu-tRNA(Gln). The GatDE system is specific for glutamate and does not act on aspartate. The chain is Glutamyl-tRNA(Gln) amidotransferase subunit D from Methanococcus maripaludis (strain C7 / ATCC BAA-1331).